Here is a 217-residue protein sequence, read N- to C-terminus: Frizzled-8 (217 aa).

Residues 1-26 (AGAAELQPELAVAEHVRYESTGPALC) are Extracellular-facing. Residues 27–47 (TVVFLLVYFFGMASSIWWVIL) traverse the membrane as a helical segment. Topologically, residues 48 to 69 (SLTWFLAAGMKWGNEAIAGYAQ) are cytoplasmic. The helical transmembrane segment at 70 to 90 (YFHLAAWLLPSVKSIAVLALS) threads the bilayer. The Extracellular segment spans residues 91–113 (SVDGDPVAGICYVGNQSLENLRG). N-linked (GlcNAc...) asparagine glycosylation occurs at Asn-105. The helical transmembrane segment at 114–134 (FVLAPLVVYLFTGSLFLLAGF) threads the bilayer. The Cytoplasmic portion of the chain corresponds to 135–160 (VSLFRIRSVIKQGGTKTDKLEKLMIR). The helical transmembrane segment at 161-181 (IGIFTVLYTVPATIVIACYIY) threads the bilayer. Topologically, residues 182–209 (EQHNREAWEQAQNCSCPGDPHRPKPDYA) are extracellular. N-linked (GlcNAc...) asparagine glycosylation occurs at Asn-194. The helical transmembrane segment at 210–217 (VFMLKYFM) threads the bilayer.

Belongs to the G-protein coupled receptor Fz/Smo family.

It is found in the membrane. It localises to the cell membrane. Functionally, receptor for Wnt proteins. Most of frizzled receptors are coupled to the beta-catenin canonical signaling pathway, which leads to the activation of disheveled proteins, inhibition of GSK-3 kinase, nuclear accumulation of beta-catenin and activation of Wnt target genes. A second signaling pathway involving PKC and calcium fluxes has been seen for some family members, but it is not yet clear if it represents a distinct pathway or if it can be integrated in the canonical pathway, as PKC seems to be required for Wnt-mediated inactivation of GSK-3 kinase. Both pathways seem to involve interactions with G-proteins. May be involved in transduction and intercellular transmission of polarity information during tissue morphogenesis and/or in differentiated tissues. This is Frizzled-8 (FZD8) from Gallus gallus (Chicken).